Consider the following 394-residue polypeptide: MDSQGRKVVVCDNGTGFVKCGYAGSNFPEHIFPALVGRPIIRSTTKVGNIEIKDLMVGDEASELRSMLEVNYPMENGIVRNWDDMKHLWDYTFGPEKLNIDTRNCKILLTEPPMNPTKNREKIVEVMFETYQFSGVYVAIQAVLTLYAQGLLTGVVVDSGDGVTHICPVYEDFSLPHLTRRLDIAGRDITRYLIKLLLLRGYAFNHSADFETVRMIKEKLCYVGYNIEQEQKLALETTVLVESYTLPDGRIIKVGGERFEAPEALFQPHLINVEGVGVAELLFNTIQAADIDTRSEFYKHIVLSGGSTMYPGLPSRLERELKQLYLERVLKGDVEKLSKFKIRIEDPPRRKHMVFLGGAVLADIMKDKDNFWMTRQEYQEKGVRVLEKLGVTVR.

Met-1 bears the N-acetylmethionine mark. ATP contacts are provided by residues 160–162 (GDG) and 214–218 (RMIKE). At Lys-299 the chain carries N6-acetyllysine. 305-310 (GGSTMY) is a binding site for ATP. Residue Lys-322 is modified to N6-acetyllysine.

The protein belongs to the actin family. ARP2 subfamily. As to quaternary structure, component of the Arp2/3 complex composed of ACTR2/ARP2, ACTR3/ARP3, ARPC1B/p41-ARC, ARPC2/p34-ARC, ARPC3/p21-ARC, ARPC4/p20-ARC and ARPC5/p16-ARC. Interacts with AVIL.

It localises to the cytoplasm. It is found in the cytoskeleton. Its subcellular location is the cell projection. The protein resides in the nucleus. ATP-binding component of the Arp2/3 complex, a multiprotein complex that mediates actin polymerization upon stimulation by nucleation-promoting factor (NPF). The Arp2/3 complex mediates the formation of branched actin networks in the cytoplasm, providing the force for cell motility. Seems to contact the pointed end of the daughter actin filament. In podocytes, required for the formation of lamellipodia downstream of AVIL and PLCE1 regulation. In addition to its role in the cytoplasmic cytoskeleton, the Arp2/3 complex also promotes actin polymerization in the nucleus, thereby regulating gene transcription and repair of damaged DNA. The Arp2/3 complex promotes homologous recombination (HR) repair in response to DNA damage by promoting nuclear actin polymerization, leading to drive motility of double-strand breaks (DSBs). The polypeptide is Actin-related protein 2 (ACTR2) (Pongo abelii (Sumatran orangutan)).